The chain runs to 279 residues: MATH domain and coiled-coil domain-containing protein At1g31390 (279 aa).

Positions 6–134 (EKKITWTIKN…NGDVKIVVEV (129 aa)) constitute an MATH domain. The stretch at 235 to 271 (KLDWLEKKLKEVCEARVQEIDEEWKDLTDLKENWSSD) forms a coiled coil.

This is MATH domain and coiled-coil domain-containing protein At1g31390 from Arabidopsis thaliana (Mouse-ear cress).